We begin with the raw amino-acid sequence, 596 residues long: DNA mismatch repair protein MutL (596 aa).

Belongs to the DNA mismatch repair MutL/HexB family.

Functionally, this protein is involved in the repair of mismatches in DNA. It is required for dam-dependent methyl-directed DNA mismatch repair. May act as a 'molecular matchmaker', a protein that promotes the formation of a stable complex between two or more DNA-binding proteins in an ATP-dependent manner without itself being part of a final effector complex. The protein is DNA mismatch repair protein MutL of Leptospira borgpetersenii serovar Hardjo-bovis (strain JB197).